A 344-amino-acid polypeptide reads, in one-letter code: Heat-inducible transcription repressor HrcA (344 aa).

The protein belongs to the HrcA family.

Negative regulator of class I heat shock genes (grpE-dnaK-dnaJ and groELS operons). Prevents heat-shock induction of these operons. This Streptococcus agalactiae serotype Ia (strain ATCC 27591 / A909 / CDC SS700) protein is Heat-inducible transcription repressor HrcA.